The following is a 200-amino-acid chain: Potassium-transporting ATPase KdpC subunit (200 aa).

The helical transmembrane segment at 9 to 31 (LVMLVALTALTGLVYPLAMTGVA) threads the bilayer. Positions 68 to 97 (GRPSATTAPDPQDSSKTVPSPYNAANSMGA) are disordered. Residues 71–96 (SATTAPDPQDSSKTVPSPYNAANSMG) show a composition bias toward polar residues.

Belongs to the KdpC family. As to quaternary structure, the system is composed of three essential subunits: KdpA, KdpB and KdpC.

It localises to the cell inner membrane. Part of the high-affinity ATP-driven potassium transport (or Kdp) system, which catalyzes the hydrolysis of ATP coupled with the electrogenic transport of potassium into the cytoplasm. This subunit acts as a catalytic chaperone that increases the ATP-binding affinity of the ATP-hydrolyzing subunit KdpB by the formation of a transient KdpB/KdpC/ATP ternary complex. The protein is Potassium-transporting ATPase KdpC subunit of Rhodopseudomonas palustris (strain BisA53).